The sequence spans 208 residues: Uracil phosphoribosyltransferase (208 aa).

5-phospho-alpha-D-ribose 1-diphosphate is bound by residues arginine 78, arginine 103, and 130 to 138 (DPMLATGGS). Uracil-binding positions include isoleucine 193 and 198-200 (GDA). Aspartate 199 serves as a coordination point for 5-phospho-alpha-D-ribose 1-diphosphate.

This sequence belongs to the UPRTase family. Requires Mg(2+) as cofactor.

The enzyme catalyses UMP + diphosphate = 5-phospho-alpha-D-ribose 1-diphosphate + uracil. It functions in the pathway pyrimidine metabolism; UMP biosynthesis via salvage pathway; UMP from uracil: step 1/1. Allosterically activated by GTP. Functionally, catalyzes the conversion of uracil and 5-phospho-alpha-D-ribose 1-diphosphate (PRPP) to UMP and diphosphate. This Acholeplasma laidlawii (strain PG-8A) protein is Uracil phosphoribosyltransferase.